A 296-amino-acid polypeptide reads, in one-letter code: Protoheme IX farnesyltransferase (296 aa).

The Cytoplasmic portion of the chain corresponds to 1 to 9 (MMFKQYLQV). A helical membrane pass occupies residues 10–28 (TKPGIIFGNLISVIGGFLL). At 29-37 (ASKGSIDYP) the chain is on the periplasmic side. Residues 38–56 (LFIYTLVGVSLVVASGCVF) form a helical membrane-spanning segment. The Cytoplasmic portion of the chain corresponds to 57 to 78 (NNYIDRDIDRKMERTKNRVLVK). The helical transmembrane segment at 79–97 (GLISPAVSLVYATLLGIAG) threads the bilayer. The Periplasmic segment spans residues 98–107 (FMLLWFGANP). Residues 108-126 (LACWLGVMGFVVYVGVYSL) traverse the membrane as a helical segment. The Cytoplasmic segment spans residues 127-197 (YMKRHSVYGT…YQAANIPVLP (71 aa)). A helical transmembrane segment spans residues 198 to 216 (VVKGISVAKNHITLYIIAF). Over 217-228 (AVATLMLSLGGY) the chain is Periplasmic. Residues 229–247 (AGYKYLVVAAAVSVWWLGM) traverse the membrane as a helical segment. Residues 248–268 (ALRGYKVADDRIWARKLFGFS) lie on the Cytoplasmic side of the membrane. Residues 269 to 287 (IIAITALSVMMSVDFMVPD) traverse the membrane as a helical segment. The Periplasmic portion of the chain corresponds to 288–296 (SHTLLAAVW).

It belongs to the UbiA prenyltransferase family. Protoheme IX farnesyltransferase subfamily.

It is found in the cell inner membrane. It catalyses the reaction heme b + (2E,6E)-farnesyl diphosphate + H2O = Fe(II)-heme o + diphosphate. Its pathway is porphyrin-containing compound metabolism; heme O biosynthesis; heme O from protoheme: step 1/1. In terms of biological role, converts heme B (protoheme IX) to heme O by substitution of the vinyl group on carbon 2 of heme B porphyrin ring with a hydroxyethyl farnesyl side group. The sequence is that of Protoheme IX farnesyltransferase from Escherichia coli O139:H28 (strain E24377A / ETEC).